We begin with the raw amino-acid sequence, 114 residues long: UPF0145 protein YG5714_0873 (114 aa).

The protein belongs to the UPF0145 family.

The protein is UPF0145 protein YG5714_0873 of Saccharolobus islandicus (strain Y.G.57.14 / Yellowstone #1) (Sulfolobus islandicus).